The chain runs to 244 residues: Purine nucleoside phosphorylase HI_0175 (244 aa).

Zn(2+) contacts are provided by H70, C105, and H122.

This sequence belongs to the purine nucleoside phosphorylase YfiH/LACC1 family. Homodimer. The cofactor is Cu(2+). Zn(2+) is required as a cofactor.

It carries out the reaction adenosine + phosphate = alpha-D-ribose 1-phosphate + adenine. The enzyme catalyses S-methyl-5'-thioadenosine + phosphate = 5-(methylsulfanyl)-alpha-D-ribose 1-phosphate + adenine. It catalyses the reaction inosine + phosphate = alpha-D-ribose 1-phosphate + hypoxanthine. The catalysed reaction is adenosine + H2O + H(+) = inosine + NH4(+). In terms of biological role, purine nucleoside enzyme that catalyzes the phosphorolysis of adenosine and inosine nucleosides, yielding D-ribose 1-phosphate and the respective free bases, adenine and hypoxanthine. Also catalyzes the phosphorolysis of S-methyl-5'-thioadenosine into adenine and S-methyl-5-thio-alpha-D-ribose 1-phosphate. Also has adenosine deaminase activity. This Haemophilus influenzae (strain ATCC 51907 / DSM 11121 / KW20 / Rd) protein is Purine nucleoside phosphorylase HI_0175.